Here is a 369-residue protein sequence, read N- to C-terminus: 2-aminoethylphosphonate--pyruvate transaminase (369 aa).

N6-(pyridoxal phosphate)lysine is present on lysine 193.

This sequence belongs to the class-V pyridoxal-phosphate-dependent aminotransferase family. PhnW subfamily. In terms of assembly, homodimer. The cofactor is pyridoxal 5'-phosphate.

The catalysed reaction is (2-aminoethyl)phosphonate + pyruvate = phosphonoacetaldehyde + L-alanine. In terms of biological role, involved in phosphonate degradation. This is 2-aminoethylphosphonate--pyruvate transaminase from Burkholderia pseudomallei (strain 1106a).